The sequence spans 130 residues: Histone H2A type 1-C (130 aa).

The tract at residues 1 to 22 (MSGRGKQGGKARAKAKSRSSRA) is disordered. Ser-2 bears the N-acetylserine mark. A Phosphoserine; by RPS6KA5 modification is found at Ser-2. At Arg-4 the chain carries Citrulline; alternate. The residue at position 4 (Arg-4) is a Symmetric dimethylarginine; by PRMT5; alternate. N6-(2-hydroxyisobutyryl)lysine; alternate occurs at positions 6 and 10. An N6-acetyllysine; alternate modification is found at Lys-6. Basic residues predominate over residues 7–19 (QGGKARAKAKSRS). N6-(beta-hydroxybutyryl)lysine; alternate occurs at positions 10 and 14. Position 10 is an N6-lactoyllysine; alternate (Lys-10). Position 10 is an N6-succinyllysine; alternate (Lys-10). A Glycyl lysine isopeptide (Lys-Gly) (interchain with G-Cter in ubiquitin); alternate cross-link involves residue Lys-14. A Glycyl lysine isopeptide (Lys-Gly) (interchain with G-Cter in ubiquitin) cross-link involves residue Lys-16. The residue at position 37 (Lys-37) is an N6-(2-hydroxyisobutyryl)lysine; alternate. N6-(beta-hydroxybutyryl)lysine; alternate is present on Lys-37. Residue Lys-37 is modified to N6-crotonyllysine; alternate. Residues Lys-75 and Lys-76 each carry the N6-(2-hydroxyisobutyryl)lysine modification. An N6-(2-hydroxyisobutyryl)lysine; alternate modification is found at Lys-96. N6-(beta-hydroxybutyryl)lysine; alternate is present on Lys-96. At Lys-96 the chain carries N6-succinyllysine; alternate. An N6-glutaryllysine; alternate modification is found at Lys-96. An N5-methylglutamine modification is found at Gln-105. N6-(2-hydroxyisobutyryl)lysine; alternate is present on Lys-119. Lys-119 carries the post-translational modification N6-(beta-hydroxybutyryl)lysine; alternate. Residues Lys-119 and Lys-120 each carry the N6-crotonyllysine; alternate modification. 2 positions are modified to N6-glutaryllysine; alternate: Lys-119 and Lys-120. Residue Lys-120 forms a Glycyl lysine isopeptide (Lys-Gly) (interchain with G-Cter in ubiquitin); alternate linkage. Thr-121 is modified (phosphothreonine; by DCAF1). At Lys-126 the chain carries N6-crotonyllysine; alternate. An N6-glutaryllysine; alternate modification is found at Lys-126.

It belongs to the histone H2A family. The nucleosome is a histone octamer containing two molecules each of H2A, H2B, H3 and H4 assembled in one H3-H4 heterotetramer and two H2A-H2B heterodimers. The octamer wraps approximately 147 bp of DNA. Deiminated on Arg-4 in granulocytes upon calcium entry. In terms of processing, monoubiquitination of Lys-120 (H2AK119Ub) by RING1, TRIM37 and RNF2/RING2 complex gives a specific tag for epigenetic transcriptional repression and participates in X chromosome inactivation of female mammals. It is involved in the initiation of both imprinted and random X inactivation. Ubiquitinated H2A is enriched in inactive X chromosome chromatin. Ubiquitination of H2A functions downstream of methylation of 'Lys-27' of histone H3 (H3K27me). H2AK119Ub by RNF2/RING2 can also be induced by ultraviolet and may be involved in DNA repair. Monoubiquitination of Lys-120 (H2AK119Ub) by TRIM37 may promote transformation of cells in a number of breast cancers. Following DNA double-strand breaks (DSBs), it is ubiquitinated through 'Lys-63' linkage of ubiquitin moieties by the E2 ligase UBE2N and the E3 ligases RNF8 and RNF168, leading to the recruitment of repair proteins to sites of DNA damage. Ubiquitination at Lys-14 and Lys-16 (H2AK13Ub and H2AK15Ub, respectively) in response to DNA damage is initiated by RNF168 that mediates monoubiquitination at these 2 sites, and 'Lys-63'-linked ubiquitin are then conjugated to monoubiquitin; RNF8 is able to extend 'Lys-63'-linked ubiquitin chains in vitro. Deubiquitinated by USP51 at Lys-14 and Lys-16 (H2AK13Ub and H2AK15Ub, respectively) after damaged DNA is repaired. H2AK119Ub and ionizing radiation-induced 'Lys-63'-linked ubiquitination (H2AK13Ub and H2AK15Ub) are distinct events. Post-translationally, phosphorylation on Ser-2 (H2AS1ph) is enhanced during mitosis. Phosphorylation on Ser-2 by RPS6KA5/MSK1 directly represses transcription. Acetylation of H3 inhibits Ser-2 phosphorylation by RPS6KA5/MSK1. Phosphorylation at Thr-121 (H2AT120ph) by DCAF1 is present in the regulatory region of many tumor suppresor genes and down-regulates their transcription. Glutamine methylation at Gln-105 (H2AQ104me) by FBL is specifically dedicated to polymerase I. It is present at 35S ribosomal DNA locus and impairs binding of the FACT complex. In terms of processing, symmetric dimethylation on Arg-4 by the PRDM1/PRMT5 complex may play a crucial role in the germ-cell lineage. Post-translationally, crotonylation (Kcr) is specifically present in male germ cells and marks testis-specific genes in post-meiotic cells, including X-linked genes that escape sex chromosome inactivation in haploid cells. Crotonylation marks active promoters and enhancers and confers resistance to transcriptional repressors. It is also associated with post-meiotically activated genes on autosomes. Lactylated in macrophages by EP300/P300 by using lactoyl-CoA directly derived from endogenous or exogenous lactate, leading to stimulates gene transcription.

It is found in the nucleus. Its subcellular location is the chromosome. Functionally, core component of nucleosome. Nucleosomes wrap and compact DNA into chromatin, limiting DNA accessibility to the cellular machineries which require DNA as a template. Histones thereby play a central role in transcription regulation, DNA repair, DNA replication and chromosomal stability. DNA accessibility is regulated via a complex set of post-translational modifications of histones, also called histone code, and nucleosome remodeling. The protein is Histone H2A type 1-C of Homo sapiens (Human).